A 281-amino-acid chain; its full sequence is Probable endonuclease 4 (281 aa).

Zn(2+) contacts are provided by H69, H109, E145, D179, H182, H216, D229, H231, and E261.

Belongs to the AP endonuclease 2 family. Requires Zn(2+) as cofactor.

The catalysed reaction is Endonucleolytic cleavage to 5'-phosphooligonucleotide end-products.. In terms of biological role, endonuclease IV plays a role in DNA repair. It cleaves phosphodiester bonds at apurinic or apyrimidinic (AP) sites, generating a 3'-hydroxyl group and a 5'-terminal sugar phosphate. In Chlorobaculum parvum (strain DSM 263 / NCIMB 8327) (Chlorobium vibrioforme subsp. thiosulfatophilum), this protein is Probable endonuclease 4.